The primary structure comprises 758 residues: 5-methyltetrahydropteroyltriglutamate--homocysteine methyltransferase (758 aa).

5-methyltetrahydropteroyltri-L-glutamate is bound by residues 17-20 (RELK) and lysine 117. Residues 434–436 (IGS) and glutamate 487 contribute to the L-homocysteine site. L-methionine contacts are provided by residues 434–436 (IGS) and glutamate 487. 5-methyltetrahydropteroyltri-L-glutamate is bound by residues 518 to 519 (RC) and tryptophan 564. Residue aspartate 602 participates in L-homocysteine binding. Aspartate 602 is a binding site for L-methionine. Glutamate 608 provides a ligand contact to 5-methyltetrahydropteroyltri-L-glutamate. Residues histidine 644, cysteine 646, and glutamate 668 each coordinate Zn(2+). Histidine 697 functions as the Proton donor in the catalytic mechanism. Cysteine 729 is a Zn(2+) binding site.

Belongs to the vitamin-B12 independent methionine synthase family. Zn(2+) serves as cofactor.

It catalyses the reaction 5-methyltetrahydropteroyltri-L-glutamate + L-homocysteine = tetrahydropteroyltri-L-glutamate + L-methionine. It participates in amino-acid biosynthesis; L-methionine biosynthesis via de novo pathway; L-methionine from L-homocysteine (MetE route): step 1/1. In terms of biological role, catalyzes the transfer of a methyl group from 5-methyltetrahydrofolate to homocysteine resulting in methionine formation. This is 5-methyltetrahydropteroyltriglutamate--homocysteine methyltransferase from Photorhabdus laumondii subsp. laumondii (strain DSM 15139 / CIP 105565 / TT01) (Photorhabdus luminescens subsp. laumondii).